A 248-amino-acid chain; its full sequence is Gamma-glutamyl peptidase 2 (248 aa).

The region spanning 17–212 is the Glutamine amidotransferase type-1 domain; sequence SEFVKEMYGG…IDRVHKIKFV (196 aa). The Nucleophile role is filled by cysteine 101. Active-site residues include histidine 191 and glutamate 193.

This sequence belongs to the peptidase C26 family.

It localises to the cytoplasm. Its subcellular location is the cytosol. The catalysed reaction is an S-[(1E)-1-(hydroxyimino)-omega-(methylsulfanyl)alkyl]-L-glutathione + H2O = an S-[(1E)-1-(hydroxyimino)-omega-(methylsulfanyl)alkyl]-L-cysteinylglycine + L-glutamate. It catalyses the reaction (E)-1-(glutathione-S-yl)-2-(1H-indol-3-yl)acetohydroximate + H2O = (E)-1-(glycyl-L-cystein-S-yl)-2-(1H-indol-3-yl)acetohydroximate + L-glutamate. The enzyme catalyses 2-(glutathion-S-yl)-2-(1H-indol-3-yl)acetonitrile + H2O = 2-(glycyl-L-cystein-S-yl)-2-(1H-indol-3-yl)acetonitrile + L-glutamate. It carries out the reaction (Z)-1-(glutathione-S-yl)-2-phenylacetohydroximate + H2O = (Z)-1-(glycyl-L-cystein-S-yl)-2-phenylacetohydroximate + L-glutamate. The protein operates within secondary metabolite biosynthesis. Its function is as follows. Involved in glucosinolate biosynthesis. Hydrolyzes the gamma-glutamyl peptide bond of several glutathione (GSH) conjugates to produce Cys-Gly conjugates related to glucosinolates. The gamma-Glu-Cys-Gly-GSH conjugates are the sulfur-donating molecule in glucosinolate biosynthesis. The polypeptide is Gamma-glutamyl peptidase 2 (Arabidopsis thaliana (Mouse-ear cress)).